A 466-amino-acid chain; its full sequence is Cysteine--tRNA ligase (466 aa).

Residue Cys28 coordinates Zn(2+). The 'HIGH' region motif lies at 30 to 40; it reads PTVYNYIHIGN. 3 residues coordinate Zn(2+): Cys208, His233, and Glu237. Positions 265-269 match the 'KMSKS' region motif; sequence KMSKS. Lys268 lines the ATP pocket.

It belongs to the class-I aminoacyl-tRNA synthetase family. In terms of assembly, monomer. Requires Zn(2+) as cofactor.

It localises to the cytoplasm. It catalyses the reaction tRNA(Cys) + L-cysteine + ATP = L-cysteinyl-tRNA(Cys) + AMP + diphosphate. The polypeptide is Cysteine--tRNA ligase (Staphylococcus aureus (strain USA300)).